A 204-amino-acid chain; its full sequence is MSNFTAKVPLSERMADVLISKDRWKDDEEGYLKVKYGLEIILINVMKFALVYGIALVTGLLLQTVTVHLSYLWLRRYSFGLHATKTLNCTLISLLMFVLAPFVFQNIPSNNWIVLGTFGFILLNMFLFAPADTESLPLIGEEHRKTLKRKAMIGTLILTGIALLIPFAEMKTLIMVGSLFQVISINPLTYKLLKRRYRNYEKYE.

5 helical membrane-spanning segments follow: residues 52-74, 87-107, 111-131, 151-168, and 173-190; these read YGIA…YLWL, LNCT…FQNI, NWIV…FAPA, AMIG…IPFA, and LIMV…PLTY.

The protein belongs to the AgrB family.

It is found in the cell membrane. In terms of biological role, may be involved in the proteolytic processing of a quorum sensing system signal molecule precursor. The sequence is that of Putative AgrB-like protein from Listeria monocytogenes serovar 1/2a (strain ATCC BAA-679 / EGD-e).